The chain runs to 369 residues: Serpentine receptor class epsilon-2 (369 aa).

Residues 1–20 (MLIQYHKISNNDPNRIQLLS) are Extracellular-facing. Residues 21–41 (MIFCEIILLIFELFEFAAIIF) traverse the membrane as a helical segment. The Cytoplasmic segment spans residues 42–55 (NMSRYQFHFNLKVV). The helical transmembrane segment at 56–76 (VGYAIFAYWFDIIARITIAFF) threads the bilayer. Residues 77-118 (EIGLFNLDDQTIAVETEKLPWNYKNMFFMLLFCCSTYRVYFM) lie on the Extracellular side of the membrane. A helical transmembrane segment spans residues 119–139 (FLICSVTLLLAVERFLATIWV). Over 140–148 (STYESVQHK) the chain is Cytoplasmic. Residues 149–169 (WVSIVLTSTNSIAGIFGSLLF) form a helical membrane-spanning segment. At 170–178 (HYELIFDTA) the chain is on the extracellular side. A helical membrane pass occupies residues 179-199 (VWCSLGLCFNFVSIFLYVILF). Topologically, residues 200-234 (NSNKSKIELCQTREITQSYTLSLRFQLNENLKIMN) are cytoplasmic. A helical transmembrane segment spans residues 235–255 (WIKNSILVVTCFNTLLAGFLI). The Extracellular segment spans residues 256–274 (ASNNEYLKNDYPVLVKCCH). The helical transmembrane segment at 275 to 295 (TFLNLGIAIYAQVVFFVAILA) threads the bilayer. The Cytoplasmic portion of the chain corresponds to 296-369 (DRHFRTYFLR…VAKKKRFWRV (74 aa)).

Belongs to the nematode receptor-like protein sre family.

It is found in the cell membrane. The chain is Serpentine receptor class epsilon-2 (sre-2) from Caenorhabditis elegans.